Here is a 178-residue protein sequence, read N- to C-terminus: Protein GrpE (178 aa).

Belongs to the GrpE family. In terms of assembly, homodimer.

It localises to the cytoplasm. In terms of biological role, participates actively in the response to hyperosmotic and heat shock by preventing the aggregation of stress-denatured proteins, in association with DnaK and GrpE. It is the nucleotide exchange factor for DnaK and may function as a thermosensor. Unfolded proteins bind initially to DnaJ; upon interaction with the DnaJ-bound protein, DnaK hydrolyzes its bound ATP, resulting in the formation of a stable complex. GrpE releases ADP from DnaK; ATP binding to DnaK triggers the release of the substrate protein, thus completing the reaction cycle. Several rounds of ATP-dependent interactions between DnaJ, DnaK and GrpE are required for fully efficient folding. This is Protein GrpE from Bordetella avium (strain 197N).